A 139-amino-acid chain; its full sequence is MSWPGLLYGLTTSLSRGLALAPQLWAARSMATLNQMHRLGPRKEPPKRLGPTEGRPQLKGVVLRTFIRKPKKPNSANRKCCRVRLSTGKEAVCFIPGEGHTLQEHHVVLVEGGRTQDLPGVKLKVVRGKYDCGHVQKKK.

A mitochondrion-targeting transit peptide spans 1–29 (MSWPGLLYGLTTSLSRGLALAPQLWAARS).

It belongs to the universal ribosomal protein uS12 family. As to quaternary structure, component of the mitochondrial ribosome small subunit (28S) which comprises a 12S rRNA and about 30 distinct proteins.

The protein localises to the mitochondrion. This chain is Small ribosomal subunit protein uS12m (Mrps12), found in Mus musculus (Mouse).